The sequence spans 312 residues: tRNA dimethylallyltransferase (312 aa).

12 to 19 (GPTAIGKS) is a binding site for ATP. 14 to 19 (TAIGKS) contributes to the substrate binding site. Interaction with substrate tRNA stretches follow at residues 38-41 (DSKL) and 162-166 (QRVLR).

This sequence belongs to the IPP transferase family. As to quaternary structure, monomer. Mg(2+) is required as a cofactor.

It catalyses the reaction adenosine(37) in tRNA + dimethylallyl diphosphate = N(6)-dimethylallyladenosine(37) in tRNA + diphosphate. Functionally, catalyzes the transfer of a dimethylallyl group onto the adenine at position 37 in tRNAs that read codons beginning with uridine, leading to the formation of N6-(dimethylallyl)adenosine (i(6)A). The polypeptide is tRNA dimethylallyltransferase (Buchnera aphidicola subsp. Cinara cedri (strain Cc)).